The sequence spans 57 residues: MFKYTRFERARIVGARALQIAMGAPILIDVPEGITPLDAALLEFEKGIIPLTVIRPS.

It belongs to the archaeal Rpo6/eukaryotic RPB6 RNA polymerase subunit family. Part of the RNA polymerase complex.

It localises to the cytoplasm. The enzyme catalyses RNA(n) + a ribonucleoside 5'-triphosphate = RNA(n+1) + diphosphate. In terms of biological role, DNA-dependent RNA polymerase (RNAP) catalyzes the transcription of DNA into RNA using the four ribonucleoside triphosphates as substrates. This chain is DNA-directed RNA polymerase subunit Rpo6, found in Thermococcus onnurineus (strain NA1).